The primary structure comprises 152 residues: Spermine/spermidine N(1)-acetyltransferase (152 aa).

One can recognise an N-acetyltransferase domain in the interval 3 to 152 (INIKAVTDDN…NGEKVMVKEL (150 aa)). Acetyl-CoA contacts are provided by residues 82 to 84 (FFI), 89 to 95 (QGKGLGK), and 122 to 131 (NIHAIRLYQR). Tyr-129 functions as the Proton donor in the catalytic mechanism.

Belongs to the acetyltransferase family.

It catalyses the reaction an alkane-alpha,omega-diamine + acetyl-CoA = an N-acetylalkane-alpha,omega-diamine + CoA + H(+). The enzyme catalyses spermine + acetyl-CoA = N(1)-acetylspermine + CoA + H(+). The catalysed reaction is spermidine + acetyl-CoA = N(1)-acetylspermidine + CoA + H(+). Its pathway is amine and polyamine degradation; spermine degradation. The protein operates within amine and polyamine degradation; spermidine degradation. Putrescine and N(8)-acetylspermidine are competitive inhibitors of spermidine acetylation. Functionally, acetylates both spermidine and spermine at primary propyl amine moieties, with spermine being the preferred substrate. The chain is Spermine/spermidine N(1)-acetyltransferase (bltD) from Bacillus subtilis (strain 168).